The following is a 509-amino-acid chain: ATP synthase subunit alpha (509 aa).

ATP is bound at residue 169 to 176; that stretch reads GDRQTGKT.

The protein belongs to the ATPase alpha/beta chains family. In terms of assembly, F-type ATPases have 2 components, CF(1) - the catalytic core - and CF(0) - the membrane proton channel. CF(1) has five subunits: alpha(3), beta(3), gamma(1), delta(1), epsilon(1). CF(0) has three main subunits: a(1), b(2) and c(9-12). The alpha and beta chains form an alternating ring which encloses part of the gamma chain. CF(1) is attached to CF(0) by a central stalk formed by the gamma and epsilon chains, while a peripheral stalk is formed by the delta and b chains.

The protein localises to the cell inner membrane. It carries out the reaction ATP + H2O + 4 H(+)(in) = ADP + phosphate + 5 H(+)(out). Its function is as follows. Produces ATP from ADP in the presence of a proton gradient across the membrane. The alpha chain is a regulatory subunit. This is ATP synthase subunit alpha from Paramagnetospirillum magneticum (strain ATCC 700264 / AMB-1) (Magnetospirillum magneticum).